Reading from the N-terminus, the 871-residue chain is Leucine--tRNA ligase (871 aa).

Positions 43–53 (PYPSGRIHIGH) match the 'HIGH' region motif. Residues 629–633 (KMSKS) carry the 'KMSKS' region motif. Residue lysine 632 participates in ATP binding.

The protein belongs to the class-I aminoacyl-tRNA synthetase family.

It localises to the cytoplasm. It carries out the reaction tRNA(Leu) + L-leucine + ATP = L-leucyl-tRNA(Leu) + AMP + diphosphate. In Chelativorans sp. (strain BNC1), this protein is Leucine--tRNA ligase.